Consider the following 462-residue polypeptide: MIYHDTIVALATPSGAGAIAVIRISGNNAITIASEVFQSVSGKDITKQKSHTLHLGHITDGTKVLDQVLLSIFKGTNSYTGENTIEISCHGSTYIQQQIIQLLLRKGCRMAQAGEFTLRSFLNGKMDLSQAEAVADLISSDNEAAHQIAMQQMRGGFSNEIAKLREELLNFASLIELELDFAEEDVEFADRTQFDDLLNRIEFVLKRLIDSFAVGNVIKNGIPVAIVGEPNVGKSTLLNTLLNEERAIVSEIAGTTRDTIEDELVIGGIGFRFIDTAGIRETKDVVESIGIKKTFEKIEQSQVVVFLFDSSEFKISGLKLKVALEKIKNQFPLKPLIIIGNKSDKLSETEIQNIKTEIPEILLISAKEKLGVEDLKNQLLSFVNTGALRNNQTIVTNTRHYDSLLKALDEIQKVKFGLQTNLPSDLMAIDIKQALYYFGEITGQVTNDELLGNIFANFCIGK.

Residues R23, E86, and K125 each coordinate (6S)-5-formyl-5,6,7,8-tetrahydrofolate. The region spanning 221 to 384 (GIPVAIVGEP…LKNQLLSFVN (164 aa)) is the TrmE-type G domain. Position 231 (N231) interacts with K(+). GTP-binding positions include 231 to 236 (NVGKST), 250 to 256 (SEIAGTT), and 275 to 278 (DTAG). S235 is a Mg(2+) binding site. The K(+) site is built by S250, I252, and T255. Position 256 (T256) interacts with Mg(2+). K462 serves as a coordination point for (6S)-5-formyl-5,6,7,8-tetrahydrofolate.

This sequence belongs to the TRAFAC class TrmE-Era-EngA-EngB-Septin-like GTPase superfamily. TrmE GTPase family. In terms of assembly, homodimer. Heterotetramer of two MnmE and two MnmG subunits. It depends on K(+) as a cofactor.

The protein resides in the cytoplasm. Its function is as follows. Exhibits a very high intrinsic GTPase hydrolysis rate. Involved in the addition of a carboxymethylaminomethyl (cmnm) group at the wobble position (U34) of certain tRNAs, forming tRNA-cmnm(5)s(2)U34. The sequence is that of tRNA modification GTPase MnmE from Flavobacterium psychrophilum (strain ATCC 49511 / DSM 21280 / CIP 103535 / JIP02/86).